The sequence spans 427 residues: UPF0229 protein KPN78578_11640 (427 aa).

The segment at Arg72–Gly109 is disordered. The segment covering Pro77–Arg90 has biased composition (basic and acidic residues). Positions Gln92 to Gln102 are enriched in gly residues.

The protein belongs to the UPF0229 family.

This Klebsiella pneumoniae subsp. pneumoniae (strain ATCC 700721 / MGH 78578) protein is UPF0229 protein KPN78578_11640.